The sequence spans 165 residues: uncharacterized protein (165 aa).

5 consecutive transmembrane segments (helical) span residues 30–50, 65–85, 86–106, 108–128, and 131–151; these read GWEL…AAGG, GMVW…VSGL, SAFW…VWQG, FWLL…FASG, and WTVT…SEYG.

This sequence to E.coli YcdZ.

The protein localises to the cell membrane. This is an uncharacterized protein from Escherichia coli (strain K12).